A 104-amino-acid polypeptide reads, in one-letter code: Large ribosomal subunit protein uL24 (104 aa).

This sequence belongs to the universal ribosomal protein uL24 family. As to quaternary structure, part of the 50S ribosomal subunit.

Its function is as follows. One of two assembly initiator proteins, it binds directly to the 5'-end of the 23S rRNA, where it nucleates assembly of the 50S subunit. Functionally, one of the proteins that surrounds the polypeptide exit tunnel on the outside of the subunit. The protein is Large ribosomal subunit protein uL24 of Pseudomonas syringae pv. syringae (strain B728a).